The sequence spans 301 residues: Ribonuclease H2 subunit A (301 aa).

Residue Met1 is modified to N-acetylmethionine. The 224-residue stretch at 28–251 folds into the RNase H type-2 domain; it reads PCVLGVDEAG…AQAILEKEAE (224 aa). 3 residues coordinate a divalent metal cation: Asp34, Glu35, and Asp142. The residue at position 217 (Thr217) is a Phosphothreonine. Residue Ser258 is modified to Phosphoserine.

This sequence belongs to the RNase HII family. Eukaryotic subfamily. As to quaternary structure, the RNase H2 complex is a heterotrimer composed of the catalytic subunit RNASEH2A and the non-catalytic subunits RNASEH2B and RNASEH2C. The cofactor is Mn(2+). Requires Mg(2+) as cofactor.

It is found in the nucleus. The enzyme catalyses Endonucleolytic cleavage to 5'-phosphomonoester.. In terms of biological role, catalytic subunit of RNase HII, an endonuclease that specifically degrades the RNA of RNA:DNA hybrids. Participates in DNA replication, possibly by mediating the removal of lagging-strand Okazaki fragment RNA primers during DNA replication. Mediates the excision of single ribonucleotides from DNA:RNA duplexes. This chain is Ribonuclease H2 subunit A (Rnaseh2a), found in Rattus norvegicus (Rat).